The sequence spans 862 residues: Molybdenum cofactor sulfurase (862 aa).

Ser34 carries the phosphoserine modification. N6-(pyridoxal phosphate)lysine is present on Lys264. Residue Cys424 is part of the active site. A Phosphoserine modification is found at Ser517. Residues 704 to 855 (RKTPKKGQPP…LSVGSEVLPV (152 aa)) form the MOSC domain.

It belongs to the class-V pyridoxal-phosphate-dependent aminotransferase family. MOCOS subfamily. Pyridoxal 5'-phosphate is required as a cofactor.

The enzyme catalyses Mo-molybdopterin + L-cysteine + AH2 = thio-Mo-molybdopterin + L-alanine + A + H2O. Its pathway is cofactor biosynthesis; molybdopterin biosynthesis. Its function is as follows. Sulfurates the molybdenum cofactor. Sulfation of molybdenum is essential for xanthine dehydrogenase (XDH) and aldehyde oxidase (ADO) enzymes in which molybdenum cofactor is liganded by 1 oxygen and 1 sulfur atom in active form. The polypeptide is Molybdenum cofactor sulfurase (Mocos) (Mus musculus (Mouse)).